Reading from the N-terminus, the 237-residue chain is Protein GrpE (237 aa).

A disordered region spans residues 1–65; that stretch reads MTDSYKLPDN…DAREDDRDPT (65 aa). Basic and acidic residues predominate over residues 55–65; it reads VDAREDDRDPT.

This sequence belongs to the GrpE family. Homodimer.

It localises to the cytoplasm. In terms of biological role, participates actively in the response to hyperosmotic and heat shock by preventing the aggregation of stress-denatured proteins, in association with DnaK and GrpE. It is the nucleotide exchange factor for DnaK and may function as a thermosensor. Unfolded proteins bind initially to DnaJ; upon interaction with the DnaJ-bound protein, DnaK hydrolyzes its bound ATP, resulting in the formation of a stable complex. GrpE releases ADP from DnaK; ATP binding to DnaK triggers the release of the substrate protein, thus completing the reaction cycle. Several rounds of ATP-dependent interactions between DnaJ, DnaK and GrpE are required for fully efficient folding. The sequence is that of Protein GrpE from Corynebacterium efficiens (strain DSM 44549 / YS-314 / AJ 12310 / JCM 11189 / NBRC 100395).